Reading from the N-terminus, the 242-residue chain is uncharacterized protein (242 aa).

Positions 198, 218, and 227 each coordinate S-adenosyl-L-methionine.

Belongs to the class IV-like SAM-binding methyltransferase superfamily. RNA methyltransferase TrmH family.

This is an uncharacterized protein from Mycoplasma pneumoniae (strain ATCC 29342 / M129 / Subtype 1) (Mycoplasmoides pneumoniae).